Here is a 1166-residue protein sequence, read N- to C-terminus: Folliculin-interacting protein 1 (1166 aa).

The 442-residue stretch at 37 to 478 (FDPSQIRLIV…TVMPNGQPPI (442 aa)) folds into the uDENN FNIP1/2-type domain. Residues serine 220, serine 230, serine 232, and serine 261 each carry the phosphoserine; by AMPK modification. Residue threonine 294 is modified to Phosphothreonine. Residue serine 296 is modified to Phosphoserine. The cDENN FNIP1/2-type domain maps to 486–1092 (SSQSVDMLAK…VSNLLHSTLQ (607 aa)). The residue at position 593 (serine 593) is a Phosphoserine; by AMPK. Serine 594 is subject to Phosphoserine. The Zn(2+) site is built by cysteine 608 and cysteine 610. Positions 608–615 (CNCKYCSH) match the Cys degron motif. The interval 611 to 612 (KY) is KY-finger. Zn(2+) is bound by residues cysteine 613 and histidine 615. Phosphoserine is present on residues serine 760 and serine 763. 2 disordered regions span residues 781-817 (TKPLKEERGAIDQHQETKQTTKDQSGESDTQNMVSEE) and 912-956 (LVPH…HDMT). Composition is skewed to basic and acidic residues over residues 783–805 (PLKEERGAIDQHQETKQTTKDQS) and 915–925 (HGDKESSDKKI). The tract at residues 929-1166 (TEWDIPRNES…HSPYVAQILL (238 aa)) is interaction with HSP90AA1. Serine 938 is subject to Phosphoserine; alternate; by CK2. The O-linked (GlcNAc) serine; alternate glycan is linked to serine 938. 4 positions are modified to phosphoserine; by CK2: serine 939, serine 941, serine 946, and serine 948. A dDENN FNIP1/2-type domain is found at 1102-1157 (FCVMHLEDRLQELYFKSKMLSEYLRGQMRVHVKELGVVLGIESSDLPLLAAVASTH). Lysine 1119 participates in a covalent cross-link: Glycyl lysine isopeptide (Lys-Gly) (interchain with G-Cter in ubiquitin).

The protein belongs to the FNIP family. As to quaternary structure, homodimer and homomultimer. Heterodimer and heteromultimer with FNIP2. Interacts with FLCN (via C-terminus). Component of the lysosomal folliculin complex (LFC), composed of FLCN, FNIP1 (or FNIP2), RagA/RRAGA or RagB/RRAGB GDP-bound, RagC/RRAGC or RagD/RRAGD GTP-bound, and Ragulator. Interacts with HSPCA and with the PRKAA1, PRKAB1 and PRKAG1 subunits of 5'-AMP-activated protein kinase (AMPK). Phosphorylated FLCN and AMPK are preferentially bound. Interacts with HSP70, STIP1, PTGES3, CDC37, BRAF, GCR and CDK4. Interacts with HSP90AA1; the interaction inhibits HSP90AA1 ATPase activity. Interacts with ATP2A2. In terms of processing, phosphorylated by AMPK in response to energetic stress. Phosphorylation by AMPK in response to mitochondrial damage promotes inactivation of the non-canonical mTORC1 signaling, nuclear translocation of TFEB and TFE3, inducing transcription of lysosomal or autophagy genes. Sequential phosphorylation by CK2 promotes its gradual interaction with HSP90AA1/Hsp90. Priming phosphorylation at Ser-938 is followed by relay phosphorylation at Ser-939, Ser-941, Ser-946 and Ser-948, promoting its gradual interaction with HSP90AA1/Hsp90. This leads to incremental inhibition of HSP90AA1/Hsp90 ATPase activity and gradual activation of both kinase and non-kinase clients. Dephosphorylated by protein phosphatase 5 (PP5), promoting glycosylation by OGT. GlcNAcylation at Ser-938 by OGT following dephosphorylation by protein phosphatase 5 (PP5) promotes ubiquitination and degradation by the proteasome. Post-translationally, ubiquitinated through 'Lys-11' linkage of ubiquitin moieties at Lys-1119 following glycosylation by OGT, leading to its degradation by the proteasome. Ubiquitinated by the CRL2(FEM1B) complex in response to reductive stress: reductive stress causes reduction of the conserved Cys degron in FNIP1, followed by zinc-binding, zinc acting as a molecular glue for recognition by the CRL2(FEM1B) complex. Ubiquitination leads to FNIP1 degradation, and activation of mitochondria to recalibrate reactive oxygen species (ROS). In terms of processing, oxidation of the Cys degron in normal conditions promotes its stabilization by preventing recognition and ubiquitination by the CRL2(FEM1B) complex. In terms of tissue distribution, strong expression is found in the heart, liver placenta, muscle, nasal mucosa, salivary gland and uvula and moderate expression in kidney and lung. Higher levels detected in clear cell renal cell carcinoma (RCC) and chromophobe RCC than in normal kidney tissue. Expressed in peripheral blood mononuclear cells.

It localises to the lysosome membrane. The protein resides in the cytoplasm. Its subcellular location is the cytosol. In terms of biological role, binding partner of the GTPase-activating protein FLCN: involved in the cellular response to amino acid availability by regulating the non-canonical mTORC1 signaling cascade controlling the MiT/TFE factors TFEB and TFE3. Required to promote FLCN recruitment to lysosomes and interaction with Rag GTPases, leading to activation of the non-canonical mTORC1 signaling. In low-amino acid conditions, component of the lysosomal folliculin complex (LFC) on the membrane of lysosomes, which inhibits the GTPase-activating activity of FLCN, thereby inactivating mTORC1 and promoting nuclear translocation of TFEB and TFE3. Upon amino acid restimulation, disassembly of the LFC complex liberates the GTPase-activating activity of FLCN, leading to activation of mTORC1 and subsequent inactivation of TFEB and TFE3. Together with FLCN, regulates autophagy: following phosphorylation by ULK1, interacts with GABARAP and promotes autophagy. In addition to its role in mTORC1 signaling, also acts as a co-chaperone of HSP90AA1/Hsp90: following gradual phosphorylation by CK2, inhibits the ATPase activity of HSP90AA1/Hsp90, leading to activate both kinase and non-kinase client proteins of HSP90AA1/Hsp90. Acts as a scaffold to load client protein FLCN onto HSP90AA1/Hsp90. Competes with the activating co-chaperone AHSA1 for binding to HSP90AA1, thereby providing a reciprocal regulatory mechanism for chaperoning of client proteins. Also acts as a core component of the reductive stress response by inhibiting activation of mitochondria in normal conditions: in response to reductive stress, the conserved Cys degron is reduced, leading to recognition and polyubiquitylation by the CRL2(FEM1B) complex, followed by proteasomal. Required for B-cell development. This chain is Folliculin-interacting protein 1, found in Homo sapiens (Human).